A 463-amino-acid chain; its full sequence is O-acetyltransferase SAT5 (463 aa).

Belongs to the trichothecene 3-O-acetyltransferase family.

It functions in the pathway mycotoxin biosynthesis. Functionally, O-acetyltransferase; part of the satratoxin SC1 cluster involved in the biosynthesis of satratoxins, trichothecene mycotoxins that are associated with human food poisonings. Satratoxins are suggested to be made by products of multiple gene clusters (SC1, SC2 and SC3) that encode 21 proteins in all, including polyketide synthases, acetyltransferases, and other enzymes expected to modify the trichothecene skeleton. SC1 encodes 10 proteins, SAT1 to SAT10. The largest are SAT8, which encodes a putative polyketide synthase (PKS) with a conventional non-reducing architecture, and SAT10, a putative protein containing four ankyrin repeats and thus may be involved in protein scaffolding. The putative short-chain reductase SAT3 may assist the PKS in some capacity. SAT6 contains a secretory lipase domain and acts probably as a trichothecene esterase. SAT5 encodes a putative acetyltransferase, and so, with SAT6, may affect endogenous protection from toxicity. The probable transcription factor SAT9 may regulate the expression of the SC1 cluster. SC2 encodes proteins SAT11 to SAT16, the largest of which encodes the putative reducing PKS SAT13. SAT11 is a cytochrome P450 monooxygenase, while SAT14 and SAT16 are probable acetyltransferases. The SC2 cluster may be regulated by the transcription factor SAT15. SC3 is a small cluster that encodes 5 proteins, SAT17 to SAT21. SAT21 is a putative MFS-type transporter which may have a role in exporting secondary metabolites. The four other proteins putatively encoded in SC3 include the taurine hydroxylase-like protein SAT17, the O-methyltransferase SAT18, the acetyltransferase SAT19, and the Cys6-type zinc finger SAT20, the latter being probably involved in regulation of SC3 expression. This Stachybotrys chartarum (strain CBS 109288 / IBT 7711) (Toxic black mold) protein is O-acetyltransferase SAT5.